The chain runs to 342 residues: N-acetyl-gamma-glutamyl-phosphate reductase (342 aa).

Cysteine 146 is a catalytic residue.

Belongs to the NAGSA dehydrogenase family. Type 1 subfamily.

The protein resides in the cytoplasm. The catalysed reaction is N-acetyl-L-glutamate 5-semialdehyde + phosphate + NADP(+) = N-acetyl-L-glutamyl 5-phosphate + NADPH + H(+). It functions in the pathway amino-acid biosynthesis; L-arginine biosynthesis; N(2)-acetyl-L-ornithine from L-glutamate: step 3/4. Functionally, catalyzes the NADPH-dependent reduction of N-acetyl-5-glutamyl phosphate to yield N-acetyl-L-glutamate 5-semialdehyde. The sequence is that of N-acetyl-gamma-glutamyl-phosphate reductase from Streptomyces avermitilis (strain ATCC 31267 / DSM 46492 / JCM 5070 / NBRC 14893 / NCIMB 12804 / NRRL 8165 / MA-4680).